The primary structure comprises 301 residues: uncharacterized protein (301 aa).

Disordered stretches follow at residues 56–126 (ESPT…ESDL) and 149–173 (LSTE…DASS). Basic and acidic residues predominate over residues 71–82 (VQKENQKPKDLN). The segment covering 93–102 (KNSSGLVSQI) has biased composition (polar residues). Positions 161 to 173 (SNTSSSSMSDASS) are enriched in low complexity.

This is an uncharacterized protein from Caenorhabditis elegans.